Reading from the N-terminus, the 399-residue chain is Subtilisin-like protease 1 (399 aa).

The N-terminal stretch at 1 to 19 (MGVFRFISISLAAVSAANA) is a signal peptide. The propeptide occupies 20-116 (AQILSMPHAQ…VEPDTIISVH (97 aa)). The 82-residue stretch at 34–115 (SYIVMMKDDT…FVEPDTIISV (82 aa)) folds into the Inhibitor I9 domain. In terms of domain architecture, Peptidase S8 spans 126–399 (SWGLARISNP…TNVLINNGGA (274 aa)). Active-site charge relay system residues include Asp-158 and His-190. The tract at residues 175-198 (GSNQVNDGDDRDGSGHGTHTSGTM) is disordered. N-linked (GlcNAc...) asparagine glycosylation occurs at Asn-251. The span at 282–294 (NDNQDAQSSSPAS) shows a compositional bias: polar residues. The tract at residues 282–312 (NDNQDAQSSSPASEPSVCTVGSSAEDDSRSS) is disordered. Ser-345 functions as the Charge relay system in the catalytic mechanism.

It belongs to the peptidase S8 family.

The protein localises to the secreted. Secreted subtilisin-like serine protease with keratinolytic activity that contributes to pathogenicity. The protein is Subtilisin-like protease 1 (SUB1) of Arthroderma benhamiae (Trichophyton mentagrophytes).